A 249-amino-acid chain; its full sequence is Zinc finger AN1 and C2H2 domain-containing stress-associated protein 13 (249 aa).

AN1-type zinc fingers lie at residues 7–55 (PDLG…RGDV) and 95–145 (AVKK…KPES). Zn(2+) is bound by residues C13, C18, C28, C31, C36, H39, H45, C47, C101, C106, C118, C121, C126, H129, H135, and C137. The segment at 194 to 213 (FASGNDGNSEKTQERNGKQN) is disordered. Basic and acidic residues predominate over residues 201–210 (NSEKTQERNG). Residues 220–243 (DVCPKCSRGFRDPVDLLKHIDKDH) form a C2H2-type zinc finger.

May be involved in environmental stress response. The chain is Zinc finger AN1 and C2H2 domain-containing stress-associated protein 13 (SAP13) from Arabidopsis thaliana (Mouse-ear cress).